A 555-amino-acid chain; its full sequence is MTRLDNSRVIRPATGTELSAKSWLTEAPLRMLMNNLHPDVAERPEELVVYGGIGRAARDWESYDRIVETLKRLEADQTLLVQSGKPVGVFRTHEDAPRVLIANSNLVPKWATWEHFNELDRKGLAMYGQMTAGSWIYIGTQGIVQGTYETFVEMGRQHYDDDLSGRWLLTAGLGGMGGAQPLAAVMAGASCLAIECQPSRIDMRLRTGYLDRAAETIDEAMAIIEESCAARKPLSVGLLGNAAEILPEMYRRGIRPDLLTDQTSAHDPVNGYLPAGWTVAEWIERREREPEAVAKAAKASMAVHVRAMLDFQAAGVPTVDYGNNIRQVAKDEGVANAFDFPGFVPAYIRPLFCRGIGPFRWAALSGDPEDIFKTDAKVKELLPDNHHLHRWLDMARDRIHFQGLPARICWVGLGDRHRLGLAFNEMVAKGELKAPVVIGRDHLDSGSVASPNRETEAMRDGSDAVSDWPLLNALLNTASGATWVSLHHGGGVGMGYSQHSGMVIVADGTEAAAKRLERVLWNDPATGVMRHADAGYDIALDCARDKGLDLPGILG.

Residues Gly-51–Gly-52, Gln-129, Gly-175–Gly-177, Glu-195, Arg-200, Asn-241–Ala-242, Gln-262–His-266, Tyr-272–Leu-273, and Tyr-321 each bind NAD(+). The active site involves Cys-409. Gly-491 lines the NAD(+) pocket.

This sequence belongs to the urocanase family. NAD(+) is required as a cofactor.

It is found in the cytoplasm. The catalysed reaction is 4-imidazolone-5-propanoate = trans-urocanate + H2O. It functions in the pathway amino-acid degradation; L-histidine degradation into L-glutamate; N-formimidoyl-L-glutamate from L-histidine: step 2/3. Functionally, catalyzes the conversion of urocanate to 4-imidazolone-5-propionate. The protein is Urocanate hydratase of Rhizorhabdus wittichii (strain DSM 6014 / CCUG 31198 / JCM 15750 / NBRC 105917 / EY 4224 / RW1) (Sphingomonas wittichii).